The primary structure comprises 301 residues: MSGVTYRVTGINLKAMPLGEADRIITILTREQGLIRAVAKGSRKQLSKWGGRMEPFVVNDLLVARGRWSAQTDPSQCLQRIAQAETLQSFPRLGRSLAHLTAAQYLAEVALLLALPNQPQEELFVLLVEHLERIEQAPATEAVLPLLVHGLYHLLVVGGVAPSVQACYSCGEELAGEAFFSPHAGGLVCDPCRLAQRLSPVAWVSSSVLQALGSLPNPTLPSLAERALPLASWLAAERLLRRVLELHADRAIRSAGLLASCYSVPVAETLPPTPSGQGSPVAAAAFSEEDSETLGSNLKKL.

A disordered region spans residues 272–301 (PTPSGQGSPVAAAAFSEEDSETLGSNLKKL).

This sequence belongs to the RecO family.

Involved in DNA repair and RecF pathway recombination. The protein is DNA repair protein RecO of Synechococcus sp. (strain JA-3-3Ab) (Cyanobacteria bacterium Yellowstone A-Prime).